The primary structure comprises 883 residues: Aldehyde-alcohol dehydrogenase (883 aa).

The interval 13–456 is aldehyde dehydrogenase; the sequence is KLVAEKHVDE…DNVSAINLLN (444 aa). NAD(+)-binding positions include 121–126, glycine 206, and glycine 224; that span reads ITPTTN. Cysteine 257 serves as the catalytic Nucleophile. NAD(+) contacts are provided by residues glutamate 355, leucine 435, and 438–443; that span reads GSYGRN. Positions 457–464 are linker; sequence IKKVGRRR. Residues aspartate 500, aspartate 534, 561 to 565, 612 to 613, valine 625, lysine 634, and leucine 653 each bind NAD(+); these read GSPMD and TT. Fe cation is bound by residues aspartate 668, histidine 672, histidine 736, and histidine 750.

It in the N-terminal section; belongs to the aldehyde dehydrogenase family. This sequence in the C-terminal section; belongs to the iron-containing alcohol dehydrogenase family. The cofactor is Fe(2+).

The enzyme catalyses an aldehyde + NAD(+) + H2O = a carboxylate + NADH + 2 H(+). The catalysed reaction is ethanol + NAD(+) = acetaldehyde + NADH + H(+). Has alcohol dehydrogenase activity. Has aldehyde dehydrogenase activity. Plays a role in enhancing virulence in mice, under ethanol stress conditions, perhaps by inducing expression of pneumolysin (Ply) and increasing production of hydrogen peroxide H(2)O(2). May be considered a potential virulence factor. This is Aldehyde-alcohol dehydrogenase from Streptococcus pneumoniae serotype 2 (strain D39 / NCTC 7466).